The sequence spans 557 residues: uncharacterized protein (557 aa).

The region spanning 7–206 (SSFIDMLRLG…FACFLEGMLS (200 aa)) is the DhaL domain.

This is an uncharacterized protein from Mycoplasma genitalium (strain ATCC 33530 / DSM 19775 / NCTC 10195 / G37) (Mycoplasmoides genitalium).